We begin with the raw amino-acid sequence, 434 residues long: Homogentisate 1,2-dioxygenase (434 aa).

The active-site Proton acceptor is the histidine 289. Residues histidine 332 and glutamate 338 each coordinate Fe cation. 2 residues coordinate homogentisate: tyrosine 347 and histidine 368. Histidine 368 contributes to the Fe cation binding site.

This sequence belongs to the homogentisate dioxygenase family. In terms of assembly, hexamer; dimer of trimers. The cofactor is Fe cation.

It carries out the reaction homogentisate + O2 = 4-maleylacetoacetate + H(+). It functions in the pathway amino-acid degradation; L-phenylalanine degradation; acetoacetate and fumarate from L-phenylalanine: step 4/6. Involved in the catabolism of homogentisate (2,5-dihydroxyphenylacetate or 2,5-OH-PhAc), a central intermediate in the degradation of phenylalanine and tyrosine. Catalyzes the oxidative ring cleavage of the aromatic ring of homogentisate to yield maleylacetoacetate. The chain is Homogentisate 1,2-dioxygenase from Pseudomonas fluorescens (strain ATCC BAA-477 / NRRL B-23932 / Pf-5).